Here is a 102-residue protein sequence, read N- to C-terminus: COX assembly mitochondrial protein 2 homolog (102 aa).

The region spanning 11 to 55 (TKECNMLIEFLQRCHSEKPIGKMIGKCSYWDEAVWQCTKKERIWR) is the CHCH domain. 2 consecutive short sequence motifs (cx9C motif) follow at residues 14–24 (CNMLIEFLQRC) and 37–47 (CSYWDEAVWQC). Cystine bridges form between Cys14/Cys47 and Cys24/Cys37.

Belongs to the CMC family.

Its subcellular location is the mitochondrion. Its function is as follows. May be involved in cytochrome c oxidase biogenesis. In Caenorhabditis elegans, this protein is COX assembly mitochondrial protein 2 homolog.